Reading from the N-terminus, the 410-residue chain is PHAF1 protein At3g51130 (410 aa).

This sequence belongs to the PHAF1 family.

The protein is PHAF1 protein At3g51130 of Arabidopsis thaliana (Mouse-ear cress).